Here is a 1486-residue protein sequence, read N- to C-terminus: Chromosome partition protein MukB (1486 aa).

34 to 41 (GGNGAGKS) lines the ATP pocket. 3 coiled-coil regions span residues 326–418 (LEAD…QYNQ), 444–480 (LETFQAKELEATEKMLSLEQKMSMAQTAHSQFEQAYQ), and 509–603 (RHLA…RAPV). The segment at 666-783 (PGGSEDQRLN…EVPLFGRAAR (118 aa)) is flexible hinge. Coiled-coil stretches lie at residues 835-923 (EAEI…AKLE), 977-1115 (EMLS…TAKA), and 1209-1266 (VEAI…QNVS).

This sequence belongs to the SMC family. MukB subfamily. Homodimerization via its hinge domain. Binds to DNA via its C-terminal region. Interacts, and probably forms a ternary complex, with MukE and MukF via its C-terminal region. The complex formation is stimulated by calcium or magnesium. Interacts with tubulin-related protein FtsZ.

The protein resides in the cytoplasm. It is found in the nucleoid. In terms of biological role, plays a central role in chromosome condensation, segregation and cell cycle progression. Functions as a homodimer, which is essential for chromosome partition. Involved in negative DNA supercoiling in vivo, and by this means organize and compact chromosomes. May achieve or facilitate chromosome segregation by condensation DNA from both sides of a centrally located replisome during cell division. The polypeptide is Chromosome partition protein MukB (Escherichia coli O127:H6 (strain E2348/69 / EPEC)).